Here is a 117-residue protein sequence, read N- to C-terminus: Large ribosomal subunit protein uL18 (117 aa).

The protein belongs to the universal ribosomal protein uL18 family. Part of the 50S ribosomal subunit; part of the 5S rRNA/L5/L18/L25 subcomplex. Contacts the 5S and 23S rRNAs.

Functionally, this is one of the proteins that bind and probably mediate the attachment of the 5S RNA into the large ribosomal subunit, where it forms part of the central protuberance. This Mannheimia succiniciproducens (strain KCTC 0769BP / MBEL55E) protein is Large ribosomal subunit protein uL18.